The primary structure comprises 420 residues: Serine hydroxymethyltransferase (420 aa).

(6S)-5,6,7,8-tetrahydrofolate-binding positions include Leu-121 and 125–127 (GHL). Lys-230 is modified (N6-(pyridoxal phosphate)lysine). 355–357 (SPF) contacts (6S)-5,6,7,8-tetrahydrofolate.

Belongs to the SHMT family. As to quaternary structure, homodimer. Requires pyridoxal 5'-phosphate as cofactor.

It localises to the cytoplasm. The enzyme catalyses (6R)-5,10-methylene-5,6,7,8-tetrahydrofolate + glycine + H2O = (6S)-5,6,7,8-tetrahydrofolate + L-serine. Its pathway is one-carbon metabolism; tetrahydrofolate interconversion. It functions in the pathway amino-acid biosynthesis; glycine biosynthesis; glycine from L-serine: step 1/1. Its function is as follows. Catalyzes the reversible interconversion of serine and glycine with tetrahydrofolate (THF) serving as the one-carbon carrier. This reaction serves as the major source of one-carbon groups required for the biosynthesis of purines, thymidylate, methionine, and other important biomolecules. Also exhibits THF-independent aldolase activity toward beta-hydroxyamino acids, producing glycine and aldehydes, via a retro-aldol mechanism. This is Serine hydroxymethyltransferase from Streptococcus gordonii (strain Challis / ATCC 35105 / BCRC 15272 / CH1 / DL1 / V288).